A 104-amino-acid polypeptide reads, in one-letter code: Large ribosomal subunit protein uL24 (104 aa).

This sequence belongs to the universal ribosomal protein uL24 family. As to quaternary structure, part of the 50S ribosomal subunit.

Its function is as follows. One of two assembly initiator proteins, it binds directly to the 5'-end of the 23S rRNA, where it nucleates assembly of the 50S subunit. Functionally, one of the proteins that surrounds the polypeptide exit tunnel on the outside of the subunit. This is Large ribosomal subunit protein uL24 from Buchnera aphidicola subsp. Acyrthosiphon pisum (strain 5A).